We begin with the raw amino-acid sequence, 196 residues long: 7-methyl-GTP pyrophosphatase (196 aa).

The Proton acceptor role is filled by aspartate 72.

The protein belongs to the Maf family. YceF subfamily. The cofactor is a divalent metal cation.

The protein localises to the cytoplasm. The enzyme catalyses N(7)-methyl-GTP + H2O = N(7)-methyl-GMP + diphosphate + H(+). Its function is as follows. Nucleoside triphosphate pyrophosphatase that hydrolyzes 7-methyl-GTP (m(7)GTP). May have a dual role in cell division arrest and in preventing the incorporation of modified nucleotides into cellular nucleic acids. This chain is 7-methyl-GTP pyrophosphatase, found in Neisseria meningitidis serogroup A / serotype 4A (strain DSM 15465 / Z2491).